We begin with the raw amino-acid sequence, 103 residues long: Co-chaperonin GroES (103 aa).

Belongs to the GroES chaperonin family. As to quaternary structure, heptamer of 7 subunits arranged in a ring. Interacts with the chaperonin GroEL.

Its subcellular location is the cytoplasm. In terms of biological role, together with the chaperonin GroEL, plays an essential role in assisting protein folding. The GroEL-GroES system forms a nano-cage that allows encapsulation of the non-native substrate proteins and provides a physical environment optimized to promote and accelerate protein folding. GroES binds to the apical surface of the GroEL ring, thereby capping the opening of the GroEL channel. The polypeptide is Co-chaperonin GroES (Parasynechococcus marenigrum (strain WH8102)).